The following is a 320-amino-acid chain: Aspartate carbamoyltransferase catalytic subunit (320 aa).

Residues R53 and T54 each coordinate carbamoyl phosphate. Residue K82 participates in L-aspartate binding. R103, H131, and Q134 together coordinate carbamoyl phosphate. Residues R164 and R227 each coordinate L-aspartate. Carbamoyl phosphate-binding residues include L266 and P267.

It belongs to the aspartate/ornithine carbamoyltransferase superfamily. ATCase family. In terms of assembly, heterododecamer (2C3:3R2) of six catalytic PyrB chains organized as two trimers (C3), and six regulatory PyrI chains organized as three dimers (R2).

The catalysed reaction is carbamoyl phosphate + L-aspartate = N-carbamoyl-L-aspartate + phosphate + H(+). The protein operates within pyrimidine metabolism; UMP biosynthesis via de novo pathway; (S)-dihydroorotate from bicarbonate: step 2/3. Catalyzes the condensation of carbamoyl phosphate and aspartate to form carbamoyl aspartate and inorganic phosphate, the committed step in the de novo pyrimidine nucleotide biosynthesis pathway. In Bifidobacterium adolescentis (strain ATCC 15703 / DSM 20083 / NCTC 11814 / E194a), this protein is Aspartate carbamoyltransferase catalytic subunit.